Here is a 136-residue protein sequence, read N- to C-terminus: uncharacterized protein (136 aa).

This is an uncharacterized protein from Leptolyngbya boryana (Plectonema boryanum).